An 82-amino-acid chain; its full sequence is Small ribosomal subunit protein eS27A (82 aa).

The segment at 37–59 (CPGCLNITTVFSHAQTAVTCESC) adopts a C4-type zinc-finger fold. An S-methylcysteine modification is found at C40.

The protein belongs to the eukaryotic ribosomal protein eS27 family. Component of the small ribosomal subunit (SSU). Mature yeast ribosomes consist of a small (40S) and a large (60S) subunit. The 40S small subunit contains 1 molecule of ribosomal RNA (18S rRNA) and 33 different proteins (encoded by 57 genes). The large 60S subunit contains 3 rRNA molecules (25S, 5.8S and 5S rRNA) and 46 different proteins (encoded by 81 genes). Zn(2+) is required as a cofactor. In terms of processing, the N-terminus is not modified.

It is found in the cytoplasm. Its function is as follows. Component of the ribosome, a large ribonucleoprotein complex responsible for the synthesis of proteins in the cell. The small ribosomal subunit (SSU) binds messenger RNAs (mRNAs) and translates the encoded message by selecting cognate aminoacyl-transfer RNA (tRNA) molecules. The large subunit (LSU) contains the ribosomal catalytic site termed the peptidyl transferase center (PTC), which catalyzes the formation of peptide bonds, thereby polymerizing the amino acids delivered by tRNAs into a polypeptide chain. The nascent polypeptides leave the ribosome through a tunnel in the LSU and interact with protein factors that function in enzymatic processing, targeting, and the membrane insertion of nascent chains at the exit of the ribosomal tunnel. The sequence is that of Small ribosomal subunit protein eS27A from Saccharomyces cerevisiae (strain ATCC 204508 / S288c) (Baker's yeast).